Here is a 140-residue protein sequence, read N- to C-terminus: Nucleoside diphosphate kinase (140 aa).

ATP contacts are provided by K11, F59, R87, T93, R104, and N114. H117 functions as the Pros-phosphohistidine intermediate in the catalytic mechanism.

This sequence belongs to the NDK family. As to quaternary structure, homotetramer. Mg(2+) is required as a cofactor.

It is found in the cytoplasm. The enzyme catalyses a 2'-deoxyribonucleoside 5'-diphosphate + ATP = a 2'-deoxyribonucleoside 5'-triphosphate + ADP. It carries out the reaction a ribonucleoside 5'-diphosphate + ATP = a ribonucleoside 5'-triphosphate + ADP. Its function is as follows. Major role in the synthesis of nucleoside triphosphates other than ATP. The ATP gamma phosphate is transferred to the NDP beta phosphate via a ping-pong mechanism, using a phosphorylated active-site intermediate. The polypeptide is Nucleoside diphosphate kinase (Rickettsia peacockii (strain Rustic)).